The chain runs to 291 residues: MKLTIATRKSKLAQVQTELIINVLKDKYGISSEKLLMETLGDKILDKSLADIGGKGLFIKDIERILLEDKADAAVHSMKDVPFEVPDMFEIAAVTLRVDVRDVFVSRDGTHFKDLKNGAVIGTSSNRRAAQLKMLRDDIKVVPIRGNVQTRIRKMGEEKLDGIILAAAGLKRLNMENIITDYFSVEEMIPAVGQGALGVEIKKENKNRDLFRKLDNKNSRMCVEAERSFMRTLNGDCHSTIGAYAEIVNGQMNVLGFYEIDGRRVKKDVSGNIEDYMSLGKTLAEKILEDK.

Cysteine 237 is modified (S-(dipyrrolylmethanemethyl)cysteine).

The protein belongs to the HMBS family. Monomer. Dipyrromethane serves as cofactor.

It catalyses the reaction 4 porphobilinogen + H2O = hydroxymethylbilane + 4 NH4(+). The protein operates within porphyrin-containing compound metabolism; protoporphyrin-IX biosynthesis; coproporphyrinogen-III from 5-aminolevulinate: step 2/4. Tetrapolymerization of the monopyrrole PBG into the hydroxymethylbilane pre-uroporphyrinogen in several discrete steps. This is Porphobilinogen deaminase from Clostridium acetobutylicum (strain ATCC 824 / DSM 792 / JCM 1419 / IAM 19013 / LMG 5710 / NBRC 13948 / NRRL B-527 / VKM B-1787 / 2291 / W).